The chain runs to 678 residues: MFFISRSDTDQATTILYIKMEFKKWHDHECDKGVVVRNLIVGTKVYARKDDGKIPPRDLLSTIGRTKTFICGTCGMRIMDMEDEMSMYDMSMRINTVLKAYADVYKGEGMAMVQKFRDQGKYFMSYYIMTMNNQDVANKTKPSIVLSPNKQHFIPDPKWDQNVALTSKWWEDDKCDYDNQYSIMEHTSSVIESLIAYGGGTMEERMKSSKAATDRGTYIHENYGKMILANAVSVFPGYENFQTVLPGRIIWNNFSLIGCTPDGLTVPSESTFHEYLEKIWEHNPKDPVPDSLMRLARKGAPHIIHEIKSLQKACARVREDWVDSKFYTFQRVGGENEEFKRDVVNYIAKLFIAAGYMQKDEISRSKYAQIEGEKVEQYTCTDPEGKYYDTGKSKPSAFTRTCKIALTDAIDYKSINLISGQVVKQLADHPLYNEEIDEKTGKKKPSKKCTVKREGGFYPCRKVLNKVGKCKIIFYRRHPVTKEPIKSFDLDFDESPFRLTVNGDHFIQTMTQMATCTWLNKNMKHMYTSVLSFFDGTAAPAVQISWEQNMTLDLIDDYMYHTCKRVREVCPKTWAQVFRKAEFTGVPLCLRPDISVDIDSYIPPKVGMENIEEMDAKESEDMFNSMMKCFGMTEDTTADKPIKKRKRVTFEDDIIEVKKLTKIHRGRQATHEISDEED.

This is an uncharacterized protein from Ostreid herpesvirus 1 (isolate France) (OsHV-1).